Here is a 491-residue protein sequence, read N- to C-terminus: uncharacterized protein (491 aa).

This is an uncharacterized protein from Schizosaccharomyces pombe (strain 972 / ATCC 24843) (Fission yeast).